We begin with the raw amino-acid sequence, 488 residues long: Ribulose bisphosphate carboxylase large chain (488 aa).

Substrate contacts are provided by Asn-127 and Thr-177. Residue Lys-179 is the Proton acceptor of the active site. Lys-181 serves as a coordination point for substrate. Positions 205, 207, and 208 each coordinate Mg(2+). Position 205 is an N6-carboxylysine (Lys-205). Catalysis depends on His-297, which acts as the Proton acceptor. Residues Arg-298, His-330, and Ser-382 each contribute to the substrate site.

Belongs to the RuBisCO large chain family. Type I subfamily. In terms of assembly, heterohexadecamer of 8 large chains and 8 small chains. Requires Mg(2+) as cofactor.

It is found in the plastid. Its subcellular location is the chloroplast. The catalysed reaction is 2 (2R)-3-phosphoglycerate + 2 H(+) = D-ribulose 1,5-bisphosphate + CO2 + H2O. It catalyses the reaction D-ribulose 1,5-bisphosphate + O2 = 2-phosphoglycolate + (2R)-3-phosphoglycerate + 2 H(+). In terms of biological role, ruBisCO catalyzes two reactions: the carboxylation of D-ribulose 1,5-bisphosphate, the primary event in carbon dioxide fixation, as well as the oxidative fragmentation of the pentose substrate in the photorespiration process. Both reactions occur simultaneously and in competition at the same active site. This chain is Ribulose bisphosphate carboxylase large chain (rbcL), found in Pyropia dentata (Red alga).